A 186-amino-acid chain; its full sequence is Large ribosomal subunit protein uL5 (186 aa).

This sequence belongs to the universal ribosomal protein uL5 family. As to quaternary structure, part of the 50S ribosomal subunit; part of the 5S rRNA/L5/L18/L25 subcomplex. Contacts the 5S rRNA and the P site tRNA. Forms a bridge to the 30S subunit in the 70S ribosome.

This is one of the proteins that bind and probably mediate the attachment of the 5S RNA into the large ribosomal subunit, where it forms part of the central protuberance. In the 70S ribosome it contacts protein S13 of the 30S subunit (bridge B1b), connecting the 2 subunits; this bridge is implicated in subunit movement. Contacts the P site tRNA; the 5S rRNA and some of its associated proteins might help stabilize positioning of ribosome-bound tRNAs. This is Large ribosomal subunit protein uL5 from Maricaulis maris (strain MCS10) (Caulobacter maris).